We begin with the raw amino-acid sequence, 146 residues long: 3-hydroxyacyl-[acyl-carrier-protein] dehydratase FabZ (146 aa).

The active site involves His49.

It belongs to the thioester dehydratase family. FabZ subfamily.

Its subcellular location is the cytoplasm. The catalysed reaction is a (3R)-hydroxyacyl-[ACP] = a (2E)-enoyl-[ACP] + H2O. Functionally, involved in unsaturated fatty acids biosynthesis. Catalyzes the dehydration of short chain beta-hydroxyacyl-ACPs and long chain saturated and unsaturated beta-hydroxyacyl-ACPs. This chain is 3-hydroxyacyl-[acyl-carrier-protein] dehydratase FabZ, found in Pseudomonas savastanoi pv. phaseolicola (strain 1448A / Race 6) (Pseudomonas syringae pv. phaseolicola (strain 1448A / Race 6)).